A 338-amino-acid polypeptide reads, in one-letter code: MYG1 protein YER156C (338 aa).

This sequence belongs to the MYG1 family.

The chain is MYG1 protein YER156C from Saccharomyces cerevisiae (strain ATCC 204508 / S288c) (Baker's yeast).